The primary structure comprises 701 residues: Ephexin-1 (701 aa).

Basic and acidic residues-rich tracts occupy residues 1 to 11 (METKNSEDQGK) and 26 to 48 (GPAE…EEPR). The segment at 1 to 141 (METKNSEDQG…TPEECPALTD (141 aa)) is disordered. The tract at residues 1–264 (METKNSEDQG…LDILQPEETK (264 aa)) is regulatory region; modulates activity toward RHOA, RAC1 and CDC42. Residues 120–132 (ASESSSTPGNGTT) show a composition bias toward polar residues. Tyrosine 172 is modified (phosphotyrosine). The tract at residues 187-226 (RRQQDAEIQGNSDGSQAGEDNAEEEEEEEEEPASPPERRA) is disordered. Acidic residues predominate over residues 206-218 (DNAEEEEEEEEEP). The DH domain occupies 264-448 (KLQEAMFELV…EMVVKACNEG (185 aa)). Positions 480–592 (WLLKQGELQQ…WMTSLAPNRR (113 aa)) constitute a PH domain. An SH3 domain is found at 603 to 664 (LDCPQVQCVH…PSSMTEEILN (62 aa)). Residues 679 to 690 (HKMEDPQRSQNK) are compositionally biased toward basic and acidic residues. The tract at residues 679-701 (HKMEDPQRSQNKDRRKLGSRNRQ) is disordered. Basic residues predominate over residues 691 to 701 (DRRKLGSRNRQ).

Interacts with CDK5R1 and EPHA4; activated by EPHA4 through the CDK5 kinase. Post-translationally, phosphorylation by CDK5 upon EPHA4 activation by EFNA1 may regulate dendritic spine morphogenesis. Src-dependent phosphorylation at Tyr-172 upon EPHA4 activation increases the guanine exchange factor activity toward RHOA. Expressed in telencephalic neurons (at protein level). Expressed in brain, spinal cord and testis.

It is found in the cytoplasm. Its subcellular location is the membrane. It localises to the cell projection. The protein localises to the growth cone. Acts as a guanine nucleotide exchange factor (GEF) which differentially activates the GTPases RHOA, RAC1 and CDC42. Plays a role in axon guidance regulating ephrin-induced growth cone collapse and dendritic spine morphogenesis. Upon activation by ephrin through EPHA4, the GEF activity switches toward RHOA resulting in its activation. Activated RHOA promotes cone retraction at the expense of RAC1- and CDC42-stimulated growth cone extension. The polypeptide is Ephexin-1 (Ngef) (Rattus norvegicus (Rat)).